A 431-amino-acid polypeptide reads, in one-letter code: Trigger factor (431 aa).

One can recognise a PPIase FKBP-type domain in the interval 163–248 (GDTVVIDYAG…IHEVKGKELP (86 aa)).

It belongs to the FKBP-type PPIase family. Tig subfamily.

It is found in the cytoplasm. It carries out the reaction [protein]-peptidylproline (omega=180) = [protein]-peptidylproline (omega=0). In terms of biological role, involved in protein export. Acts as a chaperone by maintaining the newly synthesized protein in an open conformation. Functions as a peptidyl-prolyl cis-trans isomerase. This Latilactobacillus sakei subsp. sakei (strain 23K) (Lactobacillus sakei subsp. sakei) protein is Trigger factor.